A 1754-amino-acid polypeptide reads, in one-letter code: Collagen alpha-1(XVIII) chain (1754 aa).

Positions 1–23 (MAPYPCGCHILLLLFCCLAAARA) are cleaved as a signal peptide. Residues 42 to 104 (ATTIPEPQGP…TSAESPDAPE (63 aa)) are disordered. The span at 57–73 (TADTTTHVTPRNGSTEP) shows a compositional bias: polar residues. Residues asparagine 68, asparagine 129, and asparagine 164 are each glycosylated (N-linked (GlcNAc...) asparagine). Positions 152–256 (LALAGPSSTP…APSQQLQRPD (105 aa)) are disordered. Residues 157–169 (PSSTPQENGTTLW) show a composition bias toward polar residues. Over residues 215 to 253 (SGRASLSSLLGGAPPWGSLQDPDSQGLSPAAAAPSQQLQ) the composition is skewed to low complexity. The FZ domain occupies 329-446 (APAGRCLPLP…TQEDGYCVLI (118 aa)). Cystine bridges form between cysteine 334–cysteine 397, cysteine 344–cysteine 390, cysteine 381–cysteine 419, cysteine 408–cysteine 443, and cysteine 412–cysteine 432. The Laminin G-like domain maps to 456–644 (EVGLLQLLGD…IAELKVRRDP (189 aa)). The segment at 645-751 (QVSPMHCLDE…RTPGGRVKEG (107 aa)) is nonhelical region 1 (NC1). The disordered stretch occupies residues 645–1443 (QVSPMHCLDE…GPPGTMGASS (799 aa)). Positions 672–681 (DARELLREET) are enriched in basic and acidic residues. Phosphothreonine is present on threonine 696. Residues 717-738 (QTTVASLGAQTLPGSDSVSTWD) are compositionally biased toward polar residues. A triple-helical region 1 (COL1) region spans residues 752–785 (GLKGQKGEPGVPGPPGRAGPPGSPCLPGPPGLPC). Residues 762–789 (VPGPPGRAGPPGSPCLPGPPGLPCPVSP) are compositionally biased toward pro residues. Residues 786-795 (PVSPLGPAGP) are nonhelical region 2 (NC2). Residues 796–875 (ALQTVPGPQG…QGPPGPPGPS (80 aa)) are triple-helical region 2 (COL2). The segment covering 815–831 (TPGRDGEPGDPGEDGKP) has biased composition (basic and acidic residues). The span at 833-846 (DTGPQGFPGTPGDV) shows a compositional bias: low complexity. The segment covering 862–874 (PPGPQGPPGPPGP) has biased composition (pro residues). Positions 876–899 (FRHDKLTFIDMEGSGFGGDLEALR) are nonhelical region 3 (NC3). A glycan (O-linked (Xyl...) (chondroitin sulfate) serine) is linked at serine 889. Positions 900–1021 (GPRGFPGPPG…PGPPGPPGPG (122 aa)) are triple-helical region 3 (COL3). Residues 904-914 (FPGPPGPPGVP) show a composition bias toward pro residues. N-linked (GlcNAc...) asparagine glycosylation occurs at asparagine 926. Over residues 930-942 (VPGPAGLPGVPGR) the composition is skewed to low complexity. Positions 946–961 (PGFPGLPGPPGPPGRE) are enriched in pro residues. Low complexity predominate over residues 976-1003 (AGAPGHKGSKGAPGPAGARGESGLAGAP). Positions 1005–1021 (PAGPPGPPGPPGPPGPG) are enriched in pro residues. A nonhelical region 4 (NC4) region spans residues 1022–1044 (LPAGFDDMEGSGGPFWSTARSAD). The segment at 1045–1127 (GPQGPPGLPG…PGPPGPPGPV (83 aa)) is triple-helical region 4 (COL4). Over residues 1053–1065 (PGLKGDPGVPGLP) the composition is skewed to low complexity. A compositionally biased stretch (basic and acidic residues) spans 1095–1109 (KGDRGSRGEKGDPGK). The segment covering 1117–1126 (LPGPPGPPGP) has biased composition (pro residues). Positions 1128-1141 (VYVSEQDGSVLSVP) are nonhelical region 5 (NC5). Positions 1141–1153 (PGPEGRPGFAGFP) are enriched in low complexity. A triple-helical region 5 (COL5) region spans residues 1142-1183 (GPEGRPGFAGFPGPAGPKGNLGSKGERGSPGPKGEKGEPGSI). Residues 1184-1196 (FSPDGGALGPAQK) are nonhelical region 6 (NC6). A triple-helical region 6 (COL6) region spans residues 1197-1269 (GAKGEPGFRG…PGPPGPPGTP (73 aa)). Residues 1254 to 1268 (PGPPGPPGPPGPPGT) are compositionally biased toward pro residues. The segment at 1270 to 1279 (VYDSNVFAES) is nonhelical region 7 (NC7). A triple-helical region 7 (COL7) region spans residues 1280-1312 (SRPGPPGLPGNQGPPGPKGAKGEVGPPGPPGQF). A compositionally biased stretch (pro residues) spans 1282–1296 (PGPPGLPGNQGPPGP). Residues 1313 to 1324 (PFDFLQLEAEMK) are nonhelical region 8 (NC8). Residues 1321–1341 (AEMKGEKGDRGDAGQKGERGE) show a composition bias toward basic and acidic residues. The tract at residues 1325-1346 (GEKGDRGDAGQKGERGEPGGGG) is triple-helical region 8 (COL8). The Cell attachment site signature appears at 1330–1332 (RGD). The segment at 1347-1353 (FFGSSLP) is nonhelical region 9 (NC9). Composition is skewed to pro residues over residues 1353-1365 (PGPP…PGPR), 1401-1414 (PPGP…PSFP), and 1424-1436 (PGPP…PGPP). A triple-helical region 9 (COL9) region spans residues 1354–1411 (GPPGPPGPPGPRGYPGIPGPKGESIRGQPGPPGPQGPPGIGYEGRQGPPGPPGPPGPP). Positions 1412-1424 (SFPGPHRQTISVP) are nonhelical region 10 (NC10). The interval 1425–1442 (GPPGPPGPPGPPGTMGAS) is triple-helical region 10 (COL10). The tract at residues 1443–1754 (SGVRLWATRQ…IENSFMTASK (312 aa)) is nonhelical region 11 (NC11). A non-collagenous domain 1 association domain region spans residues 1456 to 1501 (GQVHEVPEGWLIFVAEQEELYVRVQNGFRKVQLEARTPLPRGTDNE). Residues 1502–1571 (VAALQPPVVQ…RPARPTSPPA (70 aa)) form a non-collagenous domain 1 hinge region region. The interval 1511–1556 (QLHDSNPYPRREHPHPTARPWRADDILASPPRLPEPQPYPGAPHHS) is disordered. Residues 1519-1535 (PRREHPHPTARPWRADD) show a composition bias toward basic and acidic residues. The segment covering 1541 to 1551 (PRLPEPQPYPG) has biased composition (pro residues). Threonine 1567 is a glycosylation site (O-linked (GalNAc...) threonine). Zn(2+) contacts are provided by histidine 1572, histidine 1574, histidine 1582, and aspartate 1647. 2 cysteine pairs are disulfide-bonded: cysteine 1604–cysteine 1744 and cysteine 1706–cysteine 1736.

The protein belongs to the multiplexin collagen family. As to quaternary structure, forms homotrimers. Recombinant non-collagenous domain 1 has stronger affinity to NID1, HSPG2 and laminin-1:NID1 complex and lower affinity to FBLN1 and FBLN2 than endostatin. Monomeric. Interacts with KDR/VEGFR2. Interacts with the ITGA5:ITGB1 complex. Interacts with NID1, HSPG2, laminin-1:NID1 complex, FBLN1 and FBLN2. Post-translationally, prolines at the third position of the tripeptide repeating unit (G-X-Y) of the triple-helical regions are hydroxylated. In terms of processing, circulating endostatins are found as sialoglycoprotein and asialoglycoprotein structures. Undergoes proteolytic processing by CTSL/cathepsin-L and elastase-like proteases to generate both non-collagenous domain 1 trimers and endostatin monomers. In tissue extracts (brain, skeletal muscle, heart, kidney, testis and liver) predominantly bands of approximately 38 kDa are detected; recombinant non-collagenous domain 1 shows similar mobility. In vitro, several proteolytic cleavage sites in the non-collagenous domain 1 hinge region generating different endostatin-like peptides are reported. In terms of tissue distribution, detected in placenta (at protein level). Present in multiple organs with highest levels in liver, lung and kidney.

The protein resides in the secreted. It is found in the extracellular space. Its subcellular location is the extracellular matrix. It localises to the basement membrane. Probably plays a major role in determining the retinal structure as well as in the closure of the neural tube. In terms of biological role, may regulate extracellular matrix-dependent motility and morphogenesis of endothelial and non-endothelial cells; the function requires homotrimerization and implicates MAPK signaling. Functionally, potently inhibits endothelial cell proliferation and angiogenesis. May inhibit angiogenesis by binding to the heparan sulfate proteoglycans involved in growth factor signaling. Inhibits VEGFA-induced endothelial cell proliferation and migration. Seems to inhibit VEGFA-mediated signaling by blocking the interaction of VEGFA to its receptor KDR/VEGFR2. Modulates endothelial cell migration in an integrin-dependent manner implicating integrin ITGA5:ITGB1 and to a lesser extent ITGAV:ITGB3 and ITGAV:ITGB5. May negatively regulate the activity of homotrimeric non-collagenous domain 1. This is Collagen alpha-1(XVIII) chain from Homo sapiens (Human).